Consider the following 634-residue polypeptide: MVSWGRGKDAYYLYISREQEEDDDDSLSFYSSQKDTEDEFCGCLFPDPEIPGSSSSSGCSSSSTELYDLAAAHAALISRQQQILSQAIPIIPEHQLAAVAAHHQHHQQLHPSVQYQLVAAATHHNHHQPQAAQPHYSAVVPRSDVIQQPPHFALHHHLQNLVQQQQQQQAHHHHQQLVGEMALVSHTHPAAVGSTTCYEKNQQKQQQVQQIPTQPQVAHVSSNAILAAAQPFYPPPVQDSQPDRPIGYGAFGVVWSVTDPRSGKRVALKKMPNVFQNLASCKRVFREIKMLSSFRHDNVLSLLDILQPANPSFFQELYVLTELMQSDLHKIIVSPQALTPDHVKVFVYQILRGLKYLHTANILHRDIKPGNLLVNSNCILKICDFGLARTWDQRDRLNMTHEVVTQYYRAPELLMGARRYTGAVDIWSVGCIFAELLQRKILFQAAGPIEQLQMIIDLLGTPSQEAMKYACEGAKNHVLRAGLRAPDTQRLYKIASPDDKNHEAVDLLQKLLHFDPDKRISVEEALQHRYLEEGRLRFHSCMCSCCYTKPNMPSRLFAQDLDPRHESPFDPKWEKDMSRLSMFELREKMYQFVMDRPALYGVALCINPQSAAYKNFASSSVAQASELPPSPQAW.

The Protein kinase domain occupies S240–L531. ATP is bound by residues I246 to V254 and K269. The active-site Proton acceptor is D366.

It belongs to the protein kinase superfamily. CMGC Ser/Thr protein kinase family. MAP kinase subfamily. In terms of assembly, component of the beta-catenin-lit-1 complex (also called the lit-1/wrm-1 complex or the wrm-1/lit-1 kinase complex) at least composed of lit-1 and wrm-1. Interacts with wrm-1 (via N-terminus); the interaction is direct and activates lit-1 kinase activity which leads to the phosphorylation of pop-1. This promotes pop-1 interaction with par-5 and translocation of pop-1 from the nucleus to the cytoplasm. Interacts with pop-1 (when phosphorylated on 'Ser-118' and 'Ser-127'); the interaction is dependent on the beta-catenin-lit-1 complex. Mg(2+) is required as a cofactor. As to expression, expressed in the pharynx and seam and vulval cells.

It localises to the cytoplasm. The protein resides in the cell cortex. The protein localises to the nucleus. The catalysed reaction is L-seryl-[protein] + ATP = O-phospho-L-seryl-[protein] + ADP + H(+). It carries out the reaction L-threonyl-[protein] + ATP = O-phospho-L-threonyl-[protein] + ADP + H(+). Has a role in the Wnt signaling pathway controlling the asymmetry of cell divisions during embryogenesis. Operates in the AB and EMS cell lineages influencing cell specification. Required for body wall muscle development, endoderm development, pop-1 asymmetry and T-cell division asymmetry. Component of the beta-catenin-lit-1 complex which promotes the phosphorylation, down-regulation and subcellular relocation of pop-1. Regulates plp-1 nuclear localization in embryos. Plays a role in male tail tip morphogenesis. This chain is Serine/threonine kinase NLK, found in Caenorhabditis elegans.